The chain runs to 292 residues: AKT-interacting protein (292 aa).

Residues 1 to 63 (MNPLWSMSAG…TSPAPAAQST (63 aa)) form a disordered region. Residues 14–23 (KRAEGEEKTL) show a composition bias toward basic and acidic residues. Phosphoserine is present on Ser30. The UBC core domain occupies 74–222 (YLEYSLLAEF…VVDSVKVCTA (149 aa)).

This sequence belongs to the ubiquitin-conjugating enzyme family. FTS subfamily. Component of the FTS/Hook/FHIP complex (FHF complex), composed of AKTIP/FTS, FHIP1B, and one or more members of the Hook family of proteins HOOK1, HOOK2, and HOOK3. Interacts directly with HOOK1, HOOK2 and HOOK3. The FHF complex associates with the homotypic vesicular sorting complex (the HOPS complex). Also interacts with AKT1. May interact with FHIP1A. In terms of tissue distribution, ubiquitous. Highest expression in kidney, testis and brain and lowest in spleen and liver.

The protein localises to the cytoplasm. The protein resides in the cell membrane. Functionally, component of the FTS/Hook/FHIP complex (FHF complex). The FHF complex may function to promote vesicle trafficking and/or fusion via the homotypic vesicular protein sorting complex (the HOPS complex). Regulates apoptosis by enhancing phosphorylation and activation of AKT1. Increases release of TNFSF6 via the AKT1/GSK3B/NFATC1 signaling cascade. FHF complex promotes the distribution of AP-4 complex to the perinuclear area of the cell. The polypeptide is AKT-interacting protein (Aktip) (Mus musculus (Mouse)).